A 261-amino-acid polypeptide reads, in one-letter code: Small ribosomal subunit protein uS2 (261 aa).

The disordered stretch occupies residues 222–261 (GKALREQDGEANEEQPISEEEKKEVLEEAMSEEDFEGDKE). 2 stretches are compositionally biased toward acidic residues: residues 230-239 (GEANEEQPIS) and 248-261 (EEAMSEEDFEGDKE).

This sequence belongs to the universal ribosomal protein uS2 family.

This is Small ribosomal subunit protein uS2 from Campylobacter lari (strain RM2100 / D67 / ATCC BAA-1060).